The following is a 1034-amino-acid chain: Beta-galactosidase (1034 aa).

The active-site Proton donor is glutamate 481. Catalysis depends on glutamate 547, which acts as the Nucleophile.

The protein belongs to the glycosyl hydrolase 2 family.

The catalysed reaction is Hydrolysis of terminal non-reducing beta-D-galactose residues in beta-D-galactosides.. In Priestia megaterium (strain DSM 319 / IMG 1521) (Bacillus megaterium), this protein is Beta-galactosidase (bgaM).